Consider the following 413-residue polypeptide: Type IV pilus assembly protein TapC (413 aa).

The next 4 helical transmembrane spans lie at 180–200, 227–247, 286–306, and 386–406; these read YPAM…LFVI, FMQH…FLYV, LSTT…AAGA, and IMVV…LPIF.

Belongs to the GSP F family.

The protein resides in the cell inner membrane. In terms of biological role, involved in the translocation of the type IV pilin. The chain is Type IV pilus assembly protein TapC (tapC) from Aeromonas hydrophila.